A 329-amino-acid polypeptide reads, in one-letter code: UDP-N-acetylenolpyruvoylglucosamine reductase (329 aa).

An FAD-binding PCMH-type domain is found at 28 to 192 (RVGGPADLLC…ARVEVRLRPG (165 aa)). Arg172 is a catalytic residue. The tract at residues 204–225 (DRERRRATQPLDRPTFGSTFTN) is disordered. The active-site Proton donor is Ser221. Glu291 is a catalytic residue. The segment at 303 to 329 (LAGLDGHAADGGGPGAASGGARPREAT) is disordered. The segment covering 311 to 320 (ADGGGPGAAS) has biased composition (gly residues).

The protein belongs to the MurB family. FAD is required as a cofactor.

It localises to the cytoplasm. The catalysed reaction is UDP-N-acetyl-alpha-D-muramate + NADP(+) = UDP-N-acetyl-3-O-(1-carboxyvinyl)-alpha-D-glucosamine + NADPH + H(+). It participates in cell wall biogenesis; peptidoglycan biosynthesis. In terms of biological role, cell wall formation. This chain is UDP-N-acetylenolpyruvoylglucosamine reductase, found in Anaeromyxobacter dehalogenans (strain 2CP-C).